The following is a 250-amino-acid chain: Triosephosphate isomerase (250 aa).

Substrate is bound at residue 9 to 11 (NWK). H94 functions as the Electrophile in the catalytic mechanism. Residue E166 is the Proton acceptor of the active site. Substrate is bound by residues G172, S211, and 232 to 233 (GG).

Belongs to the triosephosphate isomerase family. Homodimer.

The protein resides in the cytoplasm. The enzyme catalyses D-glyceraldehyde 3-phosphate = dihydroxyacetone phosphate. It participates in carbohydrate biosynthesis; gluconeogenesis. It functions in the pathway carbohydrate degradation; glycolysis; D-glyceraldehyde 3-phosphate from glycerone phosphate: step 1/1. Involved in the gluconeogenesis. Catalyzes stereospecifically the conversion of dihydroxyacetone phosphate (DHAP) to D-glyceraldehyde-3-phosphate (G3P). The protein is Triosephosphate isomerase of Methylococcus capsulatus (strain ATCC 33009 / NCIMB 11132 / Bath).